The primary structure comprises 853 residues: Protein translocase subunit SecA 1 (853 aa).

Residues glutamine 85, 103–107 (GEGKT), and aspartate 492 contribute to the ATP site.

It belongs to the SecA family. Monomer and homodimer. Part of the essential Sec protein translocation apparatus which comprises SecA, SecYEG and auxiliary proteins SecDF. Other proteins may also be involved.

It is found in the cell membrane. Its subcellular location is the cytoplasm. The catalysed reaction is ATP + H2O + cellular proteinSide 1 = ADP + phosphate + cellular proteinSide 2.. Functionally, part of the Sec protein translocase complex. Interacts with the SecYEG preprotein conducting channel. Has a central role in coupling the hydrolysis of ATP to the transfer of proteins into and across the cell membrane, serving as an ATP-driven molecular motor driving the stepwise translocation of polypeptide chains across the membrane. The polypeptide is Protein translocase subunit SecA 1 (Corynebacterium diphtheriae (strain ATCC 700971 / NCTC 13129 / Biotype gravis)).